Reading from the N-terminus, the 42-residue chain is Photosystem I reaction center subunit IX (42 aa).

Residues 7-27 form a helical membrane-spanning segment; sequence YLSVAPVLSTLWFVALAGLLI.

The protein belongs to the PsaJ family.

Its subcellular location is the plastid. The protein resides in the chloroplast thylakoid membrane. Functionally, may help in the organization of the PsaE and PsaF subunits. The chain is Photosystem I reaction center subunit IX from Atropa belladonna (Belladonna).